Here is a 590-residue protein sequence, read N- to C-terminus: Negative elongation factor C/D (590 aa).

Residues 16–43 (GSAAEWGDEADGGQQEDDSGEGEDDAEV) form a disordered region. Residues 21–43 (WGDEADGGQQEDDSGEGEDDAEV) show a composition bias toward acidic residues.

This sequence belongs to the NELF-D family. In terms of assembly, the NELF complex is composed of NELFA, NELFB, NELFCD (isoform NELF-C or isoform NELF-D) and NELFE; NELFA and NELFCD form a stable subcomplex that binds primarily through NELFCD to the N-terminus of NELFB. Binds RNA which may help to stabilize the NELF complex on nucleic acid. In vitro, the NELFA:NELFCD subcomplex binds to ssDNA and ssRNA in a sequence- and structure-dependent manner. Interacts with ARAF. Interacts with PCF11. Interacts with KAT8. As to expression, widely expressed. Expressed in heart, brain, lung, placenta, liver, skeletal and cardiac muscle, adrenal, thyroid, kidney and pancreas.

The protein resides in the nucleus. Its function is as follows. Essential component of the NELF complex, a complex that negatively regulates the elongation of transcription by RNA polymerase II. The NELF complex, which acts via an association with the DSIF complex and causes transcriptional pausing, is counteracted by the P-TEFb kinase complex. Functionally, (Microbial infection) The NELF complex is involved in HIV-1 latency possibly involving recruitment of PCF11 to paused RNA polymerase II. This chain is Negative elongation factor C/D (NELFCD), found in Homo sapiens (Human).